The sequence spans 156 residues: Ribosomal RNA large subunit methyltransferase H (156 aa).

S-adenosyl-L-methionine is bound by residues leucine 73, glycine 104, and 123-128 (LSALTL).

Belongs to the RNA methyltransferase RlmH family. Homodimer.

It is found in the cytoplasm. The enzyme catalyses pseudouridine(1915) in 23S rRNA + S-adenosyl-L-methionine = N(3)-methylpseudouridine(1915) in 23S rRNA + S-adenosyl-L-homocysteine + H(+). Functionally, specifically methylates the pseudouridine at position 1915 (m3Psi1915) in 23S rRNA. The protein is Ribosomal RNA large subunit methyltransferase H of Shewanella pealeana (strain ATCC 700345 / ANG-SQ1).